A 65-amino-acid polypeptide reads, in one-letter code: Large ribosomal subunit protein bL35 (65 aa).

This sequence belongs to the bacterial ribosomal protein bL35 family.

The sequence is that of Large ribosomal subunit protein bL35 from Psychrobacter arcticus (strain DSM 17307 / VKM B-2377 / 273-4).